A 77-amino-acid chain; its full sequence is Probable [Fe-S]-dependent transcriptional repressor (77 aa).

Residues cysteine 54, cysteine 59, cysteine 62, and cysteine 68 each coordinate iron-sulfur cluster.

This sequence belongs to the FeoC family.

May function as a transcriptional regulator that controls feoABC expression. This chain is Probable [Fe-S]-dependent transcriptional repressor, found in Proteus mirabilis (strain HI4320).